A 120-amino-acid chain; its full sequence is Protein Wnt-9 (120 aa).

Ser1 carries the O-palmitoleoyl serine; by PORCN lipid modification. Cys90 and Cys101 form a disulfide bridge.

This sequence belongs to the Wnt family. Post-translationally, palmitoleoylation is required for efficient binding to frizzled receptors. Depalmitoleoylation leads to Wnt signaling pathway inhibition.

Its subcellular location is the secreted. It localises to the extracellular space. The protein resides in the extracellular matrix. In terms of biological role, ligand for members of the frizzled family of seven transmembrane receptors. Probable developmental protein. May be a signaling molecule which affects the development of discrete regions of tissues. Is likely to signal over only few cell diameters. This chain is Protein Wnt-9 (WNT-9), found in Alopias vulpinus (Common thresher shark).